Reading from the N-terminus, the 393-residue chain is S-adenosylmethionine synthase 1 (393 aa).

Glutamate 9 contributes to the Mg(2+) binding site. Position 15 (histidine 15) interacts with ATP. Residue glutamate 43 coordinates K(+). L-methionine contacts are provided by glutamate 56 and glutamine 99. ATP contacts are provided by residues 167 to 169 (DGK), 235 to 238 (SGRF), aspartate 246, 252 to 253 (RK), alanine 269, lysine 273, and lysine 277. Aspartate 246 lines the L-methionine pocket. Lysine 277 is an L-methionine binding site.

This sequence belongs to the AdoMet synthase family. Homotetramer. Mn(2+) serves as cofactor. Mg(2+) is required as a cofactor. The cofactor is Co(2+). It depends on K(+) as a cofactor.

It is found in the cytoplasm. It catalyses the reaction L-methionine + ATP + H2O = S-adenosyl-L-methionine + phosphate + diphosphate. The protein operates within amino-acid biosynthesis; S-adenosyl-L-methionine biosynthesis; S-adenosyl-L-methionine from L-methionine: step 1/1. In terms of biological role, catalyzes the formation of S-adenosylmethionine from methionine and ATP. The reaction comprises two steps that are both catalyzed by the same enzyme: formation of S-adenosylmethionine (AdoMet) and triphosphate, and subsequent hydrolysis of the triphosphate. This chain is S-adenosylmethionine synthase 1 (METK1), found in Picea sitchensis (Sitka spruce).